Here is a 180-residue protein sequence, read N- to C-terminus: uncharacterized protein (180 aa).

This is an uncharacterized protein from Haemophilus influenzae (strain ATCC 51907 / DSM 11121 / KW20 / Rd).